A 262-amino-acid chain; its full sequence is Putative glutamine--fructose-6-phosphate aminotransferase [isomerizing] (262 aa).

Catalysis depends on Cys2, which acts as the Nucleophile; for GATase activity. Positions 2 to 262 (CGIFGYCNFL…RKSPPFVHNT (261 aa)) constitute a Glutamine amidotransferase type-2 domain.

The enzyme catalyses D-fructose 6-phosphate + L-glutamine = D-glucosamine 6-phosphate + L-glutamate. It functions in the pathway nucleotide-sugar biosynthesis; UDP-N-acetyl-alpha-D-glucosamine biosynthesis; alpha-D-glucosamine 6-phosphate from D-fructose 6-phosphate: step 1/1. In terms of biological role, involved in amino sugar synthesis (formation of chitin, supplies the amino sugars of asparagine-linked oligosaccharides of glycoproteins). This Saccharomyces cerevisiae (strain ATCC 204508 / S288c) (Baker's yeast) protein is Putative glutamine--fructose-6-phosphate aminotransferase [isomerizing].